The primary structure comprises 174 residues: Single-stranded DNA-binding protein 1 (174 aa).

An SSB domain is found at 6-111; the sequence is VNKVILVGNL…VVVNVGGTMQ (106 aa). A DNA-binding region spans residues 55–61; it reads WHRVVLF. The disordered stretch occupies residues 110-174; it reads MQMLGGRQGG…PMDFDDDIPF (65 aa). Residues 115 to 133 are compositionally biased toward gly residues; sequence GRQGGGAPAGGGQQQGGWG. The span at 134–160 shows a compositional bias: low complexity; the sequence is QPQQPQGGNQFSGGAQSRPQQQAPAAP. The short motif at 169 to 174 is the Important for interaction with partner proteins element; sequence DDDIPF.

In terms of assembly, homotetramer. Binds PriA via its C-terminus.

Its function is as follows. Plays an important role in DNA replication, recombination and repair. Binds to ssDNA and to an array of partner proteins to recruit them to their sites of action during DNA metabolism. Stimulates the ATPase activity of PriA. One tetramer binds to 26 nucleotides (nt) of ssDNA, a 55 nt piece of ssDNA probably binds 2 tetramers. The protein is Single-stranded DNA-binding protein 1 of Klebsiella pneumoniae subsp. pneumoniae (strain ATCC 700721 / MGH 78578).